The primary structure comprises 340 residues: Heat-inducible transcription repressor HrcA (340 aa).

It belongs to the HrcA family.

In terms of biological role, negative regulator of class I heat shock genes (grpE-dnaK-dnaJ and groELS operons). Prevents heat-shock induction of these operons. The polypeptide is Heat-inducible transcription repressor HrcA (Burkholderia mallei (strain NCTC 10247)).